A 426-amino-acid chain; its full sequence is Histidine--tRNA ligase (426 aa).

It belongs to the class-II aminoacyl-tRNA synthetase family. In terms of assembly, homodimer.

The protein resides in the cytoplasm. The enzyme catalyses tRNA(His) + L-histidine + ATP = L-histidyl-tRNA(His) + AMP + diphosphate + H(+). The chain is Histidine--tRNA ligase from Pseudoalteromonas atlantica (strain T6c / ATCC BAA-1087).